The primary structure comprises 424 residues: Double-stranded RNA-binding protein 8 (424 aa).

The segment covering 1 to 10 (MDMPPTPLPP) has biased composition (pro residues). A disordered region spans residues 1–22 (MDMPPTPLPPETANTSPAPNGA). DRBM domains are found at residues 33–102 (VFKS…EIVK) and 118–185 (LCKN…AIQG). Basic and acidic residues-rich tracts occupy residues 287 to 308 (KRVE…ENQH) and 318 to 328 (DEARVEQEPSR). Residues 287-330 (KRVEAEPPRDIEMVQPDKENQHSDAALVQPDDEARVEQEPSRDI) are disordered.

Functionally, binds double-stranded RNA. The chain is Double-stranded RNA-binding protein 8 (DRB8) from Oryza sativa subsp. japonica (Rice).